The chain runs to 444 residues: Probable polygalacturonase At1g80170 (444 aa).

The N-terminal stretch at 1–28 is a signal peptide; sequence MSYSRGGTLVTLLLLLVVASSLALTANA. PbH1 repeat units follow at residues 208–234, 235–256, 258–278, 288–309, 317–338, and 351–378; these read CRRVTISGLKVIAPATSPNTDGIHISV, SRGIVIDNTTVSTGDDCISIVK, STQISISNIICGPGHGISIGS, VRDITVDTAIISDTANGVRIKT, VSKIIFRNIKMNNVSNPIIIDQ, and TSAISIENISFVHVRGTSASKEAIKISC. Residue D249 is the Proton donor of the active site. Residue H272 is part of the active site.

This sequence belongs to the glycosyl hydrolase 28 family. Expressed in young, mature and dehiscing anthers. Found in stems, but not in roots or in abscission zone of floral organs.

It localises to the secreted. Its subcellular location is the cell wall. It carries out the reaction (1,4-alpha-D-galacturonosyl)n+m + H2O = (1,4-alpha-D-galacturonosyl)n + (1,4-alpha-D-galacturonosyl)m.. This Arabidopsis thaliana (Mouse-ear cress) protein is Probable polygalacturonase At1g80170.